A 392-amino-acid polypeptide reads, in one-letter code: VHSVVDYVSAAEYQVYPWGINDPTEGNRTTLHLPWLKTLSTDWHIDGKGWYSTTRGNNAIAQENPTGGPEYENNYRPKSPLFIFKYPYSKAMTPPSSYRDASITQLFYTTNVYHDVLYILGFNEKAGNFQINNWNKGGVGGDYAILNSQDGSGVNNANFATPPDGQPGRMRMYTWNASIPERDGCFEAGIVIHEYTHGVSNRLTGGPENSRCLAALESGGMGEGWSDFFATAIRLKPGDTRATDYTMGEWASNRPNGIRKYRYSTSLTTNPHMYVDADGLTSVHAIGNIWASMLYELLWNLIDKHGKGDVTKIRPVLKNGVPTDGRHLAMKIVLDGMALQPCLPNFVQARDAILDADKNLTQGSNKCEIWKAFAKRGLGVGAVFNLSKRTGS.

Positions 1–9 are excised as a propeptide; the sequence is VHSVVDYVS. Residues Asn27 and Asn176 are each glycosylated (N-linked (GlcNAc...) asparagine). His193 lines the Zn(2+) pocket. Glu194 is an active-site residue. His197 serves as a coordination point for Zn(2+). Residues Asn359 and Asn385 are each glycosylated (N-linked (GlcNAc...) asparagine).

Belongs to the peptidase M36 family. It depends on Zn(2+) as a cofactor.

Its subcellular location is the secreted. Functionally, secreted metalloproteinase probably acting as a virulence factor. This Trichophyton violaceum protein is Extracellular metalloproteinase 4 (MEP4).